The following is a 263-amino-acid chain: tRNA uridine(34) hydroxylase (263 aa).

Residues 129 to 223 (EGREIALLDT…YFEEVGGAHY (95 aa)) enclose the Rhodanese domain. The Cysteine persulfide intermediate role is filled by Cys-183.

Belongs to the TrhO family.

The enzyme catalyses uridine(34) in tRNA + AH2 + O2 = 5-hydroxyuridine(34) in tRNA + A + H2O. Functionally, catalyzes oxygen-dependent 5-hydroxyuridine (ho5U) modification at position 34 in tRNAs. The chain is tRNA uridine(34) hydroxylase from Variovorax paradoxus (strain S110).